A 400-amino-acid polypeptide reads, in one-letter code: Na(+)/H(+) antiporter NhaA (400 aa).

A run of 11 helical transmembrane segments spans residues 26–46 (AGGI…NSPL), 71–91 (LIHW…GMEV), 107–127 (IFPA…YWFI), 137–157 (GWAI…ALLS), 166–186 (IFLL…IALF), 189–209 (HGLS…LILL), 225–245 (AILW…GVII), 273–293 (FVIL…GIDV), 299–319 (PLLL…IFGF), 340–360 (IFAV…LASL), and 373–393 (LSRL…YLFL).

It belongs to the NhaA Na(+)/H(+) (TC 2.A.33) antiporter family.

It is found in the cell inner membrane. It catalyses the reaction Na(+)(in) + 2 H(+)(out) = Na(+)(out) + 2 H(+)(in). Its function is as follows. Na(+)/H(+) antiporter that extrudes sodium in exchange for external protons. This is Na(+)/H(+) antiporter NhaA from Haemophilus influenzae (strain ATCC 51907 / DSM 11121 / KW20 / Rd).